The primary structure comprises 437 residues: 26S proteasome subunit RPT4 (437 aa).

The segment at 1-51 (MSEEQDPLLAGLGETSGDNHTQQSHEQQPEQPQETEEHHEEEPSRVDPEQE) is disordered. Residue S2 is modified to N-acetylserine. Positions 20–32 (HTQQSHEQQPEQP) are enriched in low complexity. A compositionally biased stretch (basic and acidic residues) spans 35–51 (TEEHHEEEPSRVDPEQE). 222 to 229 (GPPGTGKT) is a binding site for ATP.

The protein belongs to the AAA ATPase family. Post-translationally, N-acetylated by NAT1.

The 26S proteasome is involved in the ATP-dependent degradation of ubiquitinated proteins. The regulatory (or ATPase) complex confers ATP dependency and substrate specificity to the 26S complex. The chain is 26S proteasome subunit RPT4 (RPT4) from Saccharomyces cerevisiae (strain ATCC 204508 / S288c) (Baker's yeast).